The following is a 241-amino-acid chain: Glucosamine-6-phosphate deaminase (241 aa).

Asp67 functions as the Proton acceptor; for enolization step in the catalytic mechanism. Asn136 functions as the For ring-opening step in the catalytic mechanism. His138 functions as the Proton acceptor; for ring-opening step in the catalytic mechanism. Glu143 (for ring-opening step) is an active-site residue.

This sequence belongs to the glucosamine/galactosamine-6-phosphate isomerase family. NagB subfamily.

The enzyme catalyses alpha-D-glucosamine 6-phosphate + H2O = beta-D-fructose 6-phosphate + NH4(+). It participates in amino-sugar metabolism; N-acetylneuraminate degradation; D-fructose 6-phosphate from N-acetylneuraminate: step 5/5. Its function is as follows. Catalyzes the reversible isomerization-deamination of glucosamine 6-phosphate (GlcN6P) to form fructose 6-phosphate (Fru6P) and ammonium ion. This chain is Glucosamine-6-phosphate deaminase, found in Bacillus pumilus (strain SAFR-032).